A 431-amino-acid polypeptide reads, in one-letter code: 3-phosphoshikimate 1-carboxyvinyltransferase (431 aa).

Residues Lys-26, Ser-27, and Arg-31 each contribute to the 3-phosphoshikimate site. Lys-26 is a binding site for phosphoenolpyruvate. Positions 99 and 127 each coordinate phosphoenolpyruvate. 6 residues coordinate 3-phosphoshikimate: Ser-170, Ser-171, Gln-172, Ser-199, Glu-314, and His-343. Gln-172 provides a ligand contact to phosphoenolpyruvate. Glu-314 serves as the catalytic Proton acceptor. Residues Arg-347, Arg-388, and Lys-413 each coordinate phosphoenolpyruvate.

It belongs to the EPSP synthase family. Monomer.

It localises to the cytoplasm. It catalyses the reaction 3-phosphoshikimate + phosphoenolpyruvate = 5-O-(1-carboxyvinyl)-3-phosphoshikimate + phosphate. It functions in the pathway metabolic intermediate biosynthesis; chorismate biosynthesis; chorismate from D-erythrose 4-phosphate and phosphoenolpyruvate: step 6/7. Functionally, catalyzes the transfer of the enolpyruvyl moiety of phosphoenolpyruvate (PEP) to the 5-hydroxyl of shikimate-3-phosphate (S3P) to produce enolpyruvyl shikimate-3-phosphate and inorganic phosphate. The protein is 3-phosphoshikimate 1-carboxyvinyltransferase of Mycobacterium ulcerans (strain Agy99).